Here is a 277-residue protein sequence, read N- to C-terminus: Diaminopimelate epimerase (277 aa).

Substrate is bound by residues Asn-13, Gln-46, and Asn-65. Cys-74 serves as the catalytic Proton donor. Substrate contacts are provided by residues 75 to 76 (GN), Asn-158, Asn-191, and 209 to 210 (ER). The Proton acceptor role is filled by Cys-218. 219–220 (GT) contributes to the substrate binding site.

Belongs to the diaminopimelate epimerase family. In terms of assembly, homodimer.

It is found in the cytoplasm. It catalyses the reaction (2S,6S)-2,6-diaminopimelate = meso-2,6-diaminopimelate. It participates in amino-acid biosynthesis; L-lysine biosynthesis via DAP pathway; DL-2,6-diaminopimelate from LL-2,6-diaminopimelate: step 1/1. Functionally, catalyzes the stereoinversion of LL-2,6-diaminopimelate (L,L-DAP) to meso-diaminopimelate (meso-DAP), a precursor of L-lysine and an essential component of the bacterial peptidoglycan. The chain is Diaminopimelate epimerase from Nitrosospira multiformis (strain ATCC 25196 / NCIMB 11849 / C 71).